The primary structure comprises 417 residues: 26S proteasome regulatory subunit RPN14 (417 aa).

WD repeat units follow at residues Ala134–Thr173, Gly176–Thr215, Ile242–Gln281, Lys285–Gly325, Asn330–Glu371, and Ser380–Asn416.

It belongs to the WD repeat PAAF1/RPN14 family. Associates with the 19S proteasome regulatory particle (RP). Interacts directly with RPT5 and RPT6.

It localises to the cytoplasm. The protein localises to the nucleus. Functionally, acts as a regulatory subunit of the 26 proteasome which is involved in the ATP-dependent degradation of ubiquitinated proteins. Is not a genuine component of the 26S proteasome, but an auxiliary factor that interacts with the proteasomal ATPase of 19S regulatory particle (RP). Acts as a chaperone which regulates the highly structured assembly of the 19S regulatory particle. Involved in the substrate specificity of the 26S proteasome and is especially involved in the degradation of ubiquitinated GCN4. May contribute to the stability of the 26S proteasome in some stress conditions. The protein is 26S proteasome regulatory subunit RPN14 (RPN14) of Saccharomyces cerevisiae (strain ATCC 204508 / S288c) (Baker's yeast).